The following is a 118-amino-acid chain: Large ribosomal subunit protein bL20 (118 aa).

The protein belongs to the bacterial ribosomal protein bL20 family.

Its function is as follows. Binds directly to 23S ribosomal RNA and is necessary for the in vitro assembly process of the 50S ribosomal subunit. It is not involved in the protein synthesizing functions of that subunit. This is Large ribosomal subunit protein bL20 from Thermotoga petrophila (strain ATCC BAA-488 / DSM 13995 / JCM 10881 / RKU-1).